Reading from the N-terminus, the 288-residue chain is Oxaloacetate decarboxylase (288 aa).

Serine 47 serves as a coordination point for substrate. Aspartate 85 contacts Mg(2+). Arginine 156 and histidine 232 together coordinate substrate.

It belongs to the isocitrate lyase/PEP mutase superfamily. Oxaloacetate decarboxylase family. In terms of assembly, homotetramer; dimer of dimers. Mg(2+) serves as cofactor.

It catalyses the reaction oxaloacetate + H(+) = pyruvate + CO2. In terms of biological role, catalyzes the decarboxylation of oxaloacetate into pyruvate. Seems to play a role in maintaining cellular concentrations of bicarbonate and pyruvate. The protein is Oxaloacetate decarboxylase of Bradyrhizobium sp. (strain BTAi1 / ATCC BAA-1182).